Reading from the N-terminus, the 178-residue chain is Large ribosomal subunit protein uL6 (178 aa).

The protein belongs to the universal ribosomal protein uL6 family. Part of the 50S ribosomal subunit.

Its function is as follows. This protein binds to the 23S rRNA, and is important in its secondary structure. It is located near the subunit interface in the base of the L7/L12 stalk, and near the tRNA binding site of the peptidyltransferase center. The chain is Large ribosomal subunit protein uL6 from Wolinella succinogenes (strain ATCC 29543 / DSM 1740 / CCUG 13145 / JCM 31913 / LMG 7466 / NCTC 11488 / FDC 602W) (Vibrio succinogenes).